Consider the following 255-residue polypeptide: MEIIPAIDLLDGACVRLHQGDYDQVTRFSDDPVAQALSWQSQGAKRLHLVDLDGAKRGEPANDAAVRAIANALDIPVQLGGGVRSIERAEDLLNCGLERVILGTVAIEQPDLVQVLAERHPGSVVVGIDANKGKVATRGWLEQSDVLATDLARRFSDSGIAAIITTDIATDGTLAGPNLDALREMAQASSVPVIASGGIGCMADLLSLLPLEDQGVSGVIVGRALYDGRIDLAEAIGAIGDDRLQDITCGSTDLA.

D8 (proton acceptor) is an active-site residue. The active-site Proton donor is the D129.

This sequence belongs to the HisA/HisF family.

Its subcellular location is the cytoplasm. The enzyme catalyses 1-(5-phospho-beta-D-ribosyl)-5-[(5-phospho-beta-D-ribosylamino)methylideneamino]imidazole-4-carboxamide = 5-[(5-phospho-1-deoxy-D-ribulos-1-ylimino)methylamino]-1-(5-phospho-beta-D-ribosyl)imidazole-4-carboxamide. It participates in amino-acid biosynthesis; L-histidine biosynthesis; L-histidine from 5-phospho-alpha-D-ribose 1-diphosphate: step 4/9. The sequence is that of 1-(5-phosphoribosyl)-5-[(5-phosphoribosylamino)methylideneamino] imidazole-4-carboxamide isomerase from Synechococcus sp. (strain CC9902).